Consider the following 2000-residue polypeptide: MAAVTMSVSGRKVASRPGPVPEAAQSFLYAPRTPNVGGPGGPQVEWTARRMVWVPSELHGFEAAALRDEGEEEAEVELAESGRRLRLPRDQIQRMNPPKFSKAEDMAELTCLNEASVLHNLRERYYSGLIYTYSGLFCVVINPYKQLPIYTEAIVEMYRGKKRHEVPPHVYAVTEGAYRSMLQDREDQSILCTGESGAGKTENTKKVIQYLAHVASSPKGRKEPGVPASVSTMSYGELERQLLQANPILEAFGNAKTVKNDNSSRFGKFIRINFDIAGYIVGANIETYLLEKSRAIRQAKDECSFHIFYQLLGGAGEQLKADLLLEPCSHYRFLTNGPSSSPGQERELFQETLESLRVLGLLPEEITAMLRTVSAVLQFGNIVLKKERNTDQATMPDNTAAQKLCRLLGLGVTDFSRALLTPRIKVGRDYVQKAQTKEQADFALEALAKATYERLFRWLVLRLNRALDRSPRQGASFLGILDIAGFEIFQLNSFEQLCINYTNEKLQQLFNHTMFVLEQEEYQREGIPWTFLDFGLDLQPCIDLIERPANPPGLLALLDEECWFPKATDKSFVEKVAQEQGSHPKFQRPRNLRDQADFSVLHYAGKVDYKASEWLMKNMDPLNDNVAALLHQSTDRLTAEIWKDVEGIVGLEQVSSLGDGPPGGRPRRGMFRTVGQLYKESLSRLMATLSNTNPSFVRCIVPNHEKRAGKLEPRLVLDQLRCNGVLEGIRICRQGFPNRILFQEFRQRYEILTPNAIPKGFMDGKQACEKMIQALELDPNLYRVGQSKIFFRAGVLAQLEEERDLKVTDIIVSFQAAARGYLARRAFQRRQQQQSALRVMQRNCAAYLKLRNWQWWRLFIKVKPLLQVTRQDEVLQARAQELQKVQELQQQSAREVGELQGRVAQLEEERTRLAEQLRAEAELCSEAEETRARLAARKQELELVVTELEARVGEEEECSRQLQSEKKRLQQHIQELESHLEAEEGARQKLQLEKVTTEAKMKKFEEDLLLLEDQNSKLSKERRLLEERLAEFSSQAAEEEEKVKSLNKLRLKYEATISDMEDRLKKEEKGRQELEKLKRRLDGESSELQEQMVEQKQRAEELLAQLGRKEDELQAALLRAEEEGGARAQLLKSLREAQAGLAEAQEDLEAERVARAKAEKQRRDLGEELEALRGELEDTLDSTNAQQELRSKREQEVTELKKALEEESRAHEVSMQELRQRHSQALVEMAEQLEQARRGKGVWEKTRLSLEAEVSELKAELSSLQTSRQEGEQKRRRLESQLQEVQGRSSDSERARSEAAEKLQRAQAELESVSTALSEAESKAIRLGKELSSAESQLHDTQELLQEETRAKLALGSRVRALEAEAAGLREQMEEEVVARERAGRELQSTQAQLSEWRRRQEEEAAVLEAGEEARRRAAREAETLTQRLAEKTEAVERLERARRRLQQELDDATVDLGQQKQLLSTLEKKQRKFDQLLAEEKAAVLRAVEDRERIEAEGREREARALSLTRALEEEQEAREELERQNRALRAELEALLSSKDDVGKNVHELERARKAAEQAASDLRTQVTELEDELTAAEDAKLRLEVTVQALKAQHERDLQGRDDAGEERRRQLAKQLRDAEVERDEERKQRALAMAARKKLELELEELKAQTSAAGQGKEEAVKQLKKMQVQMKELWREVEETRSSRDEMFTLSRENEKKLKGLEAEVLRLQEELAASDRARRQAQQDRDEMAEEVASGNLSKAATLEEKRQLEGRLSQLEEELEEEQNNSELLKDHYRKLVLQVESLTTELSAERSFSAKAESGRQQLERQIQELRARLGEEDAGARARQKMLIAALESKLAQAEEQLEQESRERILSGKLVRRAEKRLKEVVLQVDEERRVADQVRDQLEKSNLRLKQLKRQLEEAEEEASRAQAGRRRLQRELEDVTESAESMNREVTTLRNRLRRGPLTFTTRTVRQVFRLEEGVASDEEEAEGAEPGSAPGQEPEAPPPATPQ.

N-acetylalanine is present on alanine 2. Residue threonine 33 is modified to Phosphothreonine. Positions 47–97 constitute a Myosin N-terminal SH3-like domain; that stretch reads TARRMVWVPSELHGFEAAALRDEGEEEAEVELAESGRRLRLPRDQIQRMNP. Serine 56 carries the post-translational modification Phosphoserine. Residues 101–804 enclose the Myosin motor domain; sequence SKAEDMAELT…VLAQLEEERD (704 aa). ATP is bound at residue 194–201; the sequence is GESGAGKT. The tract at residues 682-704 is actin-binding; the sequence is LSRLMATLSNTNPSFVRCIVPNH. In terms of domain architecture, IQ spans 807–836; the sequence is VTDIIVSFQAAARGYLARRAFQRRQQQQSA. Residues 866 to 1951 are a coiled coil; sequence LQVTRQDEVL…VTTLRNRLRR (1086 aa). At serine 925 the chain carries Phosphoserine. The tract at residues 1173–1197 is disordered; sequence RGELEDTLDSTNAQQELRSKREQEV. A Phosphothreonine modification is found at threonine 1198. Residues serine 1249 and serine 1280 each carry the phosphoserine modification. Disordered stretches follow at residues 1260 to 1311, 1597 to 1629, 1720 to 1751, 1910 to 1942, and 1967 to 2000; these read ELSS…AELE, HERD…RDEE, SDRA…TLEE, AEEE…NREV, and LEEG…ATPQ. Over residues 1290 to 1304 the composition is skewed to basic and acidic residues; the sequence is SDSERARSEAAEKLQ. The span at 1720-1732 shows a compositional bias: basic and acidic residues; sequence SDRARRQAQQDRD. Over residues 1971–1980 the composition is skewed to acidic residues; it reads VASDEEEAEG. Phosphoserine occurs at positions 1973 and 1985. Positions 1981–1991 are enriched in low complexity; sequence AEPGSAPGQEP. Threonine 1998 is subject to Phosphothreonine.

The protein belongs to the TRAFAC class myosin-kinesin ATPase superfamily. Myosin family. As to quaternary structure, myosin is a hexameric protein that consists of 2 heavy chain subunits (MHC), 2 alkali light chain subunits (MLC) and 2 regulatory light chain subunits (MLC-2). As to expression, highest levels in lung, kidney, brain and colon, very low levels in liver and bladder and no expression in spleen or seminal vesicle (at protein level). Isoform 1 is expressed in liver, kidney and testis with low levels in skeletal muscle and heart. Isoform 1 and isoform 2 are expressed in brain and lung. Isoform 2 is the main isoform expressed in skeletal muscle and heart. Isoform 3 is limited to brain stem, cerebellum and spinal cord.

Cellular myosin that appears to play a role in cytokinesis, cell shape, and specialized functions such as secretion and capping. The protein is Myosin-14 (Myh14) of Mus musculus (Mouse).